Consider the following 479-residue polypeptide: M-phase inducer phosphatase (479 aa).

The segment at Met182–Pro218 is disordered. A compositionally biased stretch (basic and acidic residues) spans Glu199 to Glu209. Positions Lys316–Glu432 constitute a Rhodanese domain. Residue Cys379 is part of the active site. Ser455 bears the Phosphoserine mark.

The protein belongs to the MPI phosphatase family.

It catalyses the reaction O-phospho-L-tyrosyl-[protein] + H2O = L-tyrosyl-[protein] + phosphate. In terms of biological role, this protein functions as a dosage-dependent inducer in mitotic control. It is a tyrosine protein phosphatase required for progression of the cell cycle. It may directly dephosphorylate Cdk1 and activate the Cdk1 activity. This chain is M-phase inducer phosphatase (stg), found in Drosophila melanogaster (Fruit fly).